Here is a 186-residue protein sequence, read N- to C-terminus: Adenylate kinase isoenzyme 6 homolog (186 aa).

Residues G15, G17, K18, S19, and T20 each coordinate ATP. An NMPbind region spans residues 48–71; sequence NLSNIIKDERLYKEFDDELDASIY. The interval 126–136 is LID; the sequence is KRNYTKEKIKN. R127 lines the ATP pocket.

Belongs to the adenylate kinase family. AK6 subfamily. As to quaternary structure, monomer and homodimer. Interacts with small ribosomal subunit protein uS11. Not a structural component of 43S pre-ribosomes, but transiently interacts with them by binding to uS11.

Its subcellular location is the cytoplasm. The protein resides in the nucleus. The enzyme catalyses AMP + ATP = 2 ADP. It carries out the reaction ATP + H2O = ADP + phosphate + H(+). In terms of biological role, broad-specificity nucleoside monophosphate (NMP) kinase that catalyzes the reversible transfer of the terminal phosphate group between nucleoside triphosphates and monophosphates. Also has ATPase activity. Involved in the late cytoplasmic maturation steps of the 40S ribosomal particles, specifically 18S rRNA maturation. While NMP activity is not required for ribosome maturation, ATPase activity is. Associates transiently with small ribosomal subunit protein uS11. ATP hydrolysis breaks the interaction with uS11. May temporarily remove uS11 from the ribosome to enable a conformational change of the ribosomal RNA that is needed for the final maturation step of the small ribosomal subunit. Its NMP activity may have a role in nuclear energy homeostasis. This chain is Adenylate kinase isoenzyme 6 homolog, found in Plasmodium falciparum (isolate 3D7).